The sequence spans 327 residues: GDP-mannose transporter (327 aa).

The Cytoplasmic portion of the chain corresponds to 1–4 (MESS). The chain crosses the membrane as a helical span at residues 5-25 (LAAIANSGPISIFSYCVSSIL). Residues 26–36 (MTVTNKYVLSG) are Lumenal-facing. A helical transmembrane segment spans residues 37 to 57 (FSFNMNFLLLAVQSIVCIVTI). Residues 58 to 78 (GSLKSFGVITYRQFNKEEARK) are Cytoplasmic-facing. The chain crosses the membrane as a helical span at residues 79–93 (WSPIAVLLVIMIYTS). Topologically, residues 94 to 102 (SKALQYLSI) are lumenal. A helical transmembrane segment spans residues 103–125 (PVYTIFKNLTIILIAYGEVLWFG). Topologically, residues 126–131 (GKVTTM) are cytoplasmic. Residues 132-149 (ALSSFLLMVFSSVVAWYG) form a helical membrane-spanning segment. Residues 150–163 (DEAVSGSGNESFIA) lie on the Lumenal side of the membrane. N-linked (GlcNAc...) asparagine glycosylation is present at N158. Residues 164–184 (LYLGYFWMATNCFASAAFVLI) traverse the membrane as a helical segment. Residues 185–207 (MRKRIKLTNFKDFDTMYYNNLLS) lie on the Cytoplasmic side of the membrane. A helical membrane pass occupies residues 208–228 (IPILLASSIIFEDWSAENLAV). Topologically, residues 229-238 (NFPSDNRTAT) are lumenal. An N-linked (GlcNAc...) asparagine glycan is attached at N234. A helical membrane pass occupies residues 239–259 (IAAMVLSGASSVGISYCSAWC). At 260–266 (VRVTSST) the chain is on the cytoplasmic side. The helical transmembrane segment at 267–289 (TYSMVGALNKLPIALSGLVFFPA) threads the bilayer. At 290-292 (AVN) the chain is on the lumenal side. Residues 293–312 (FWSVASIFVGFAAGLVYAVA) traverse the membrane as a helical segment. At 313-327 (KQRQQKENVSLPSSK) the chain is on the cytoplasmic side.

Belongs to the TPT transporter family. SLC35D subfamily. In terms of assembly, homooligomer.

It is found in the golgi apparatus membrane. It localises to the cytoplasmic vesicle membrane. Its subcellular location is the endoplasmic reticulum membrane. In terms of biological role, involved in the import of GDP-mannose from the cytoplasm into the Golgi lumen. The protein is GDP-mannose transporter (VRG4) of Scheffersomyces stipitis (strain ATCC 58785 / CBS 6054 / NBRC 10063 / NRRL Y-11545) (Yeast).